Consider the following 160-residue polypeptide: Inner membrane protein YcdZ (160 aa).

5 consecutive transmembrane segments (helical) span residues tryptophan 20 to cysteine 42, leucine 50 to glycine 70, alanine 72 to methionine 92, leucine 99 to glycine 119, and leucine 123 to leucine 143.

To E.coli YahC.

The protein resides in the cell inner membrane. The polypeptide is Inner membrane protein YcdZ (ycdZ) (Salmonella typhimurium (strain LT2 / SGSC1412 / ATCC 700720)).